The sequence spans 369 residues: tRNA-specific 2-thiouridylase MnmA (369 aa).

ATP-binding positions include 11 to 18 and M37; that span reads GMSGGVDS. An interaction with target base in tRNA region spans residues 97–99; sequence NPD. The Nucleophile role is filled by C102. The cysteines at positions 102 and 199 are disulfide-linked. G127 lines the ATP pocket. The interval 149 to 151 is interaction with tRNA; that stretch reads KDQ. The Cysteine persulfide intermediate role is filled by C199. Residues 311-312 form an interaction with tRNA region; it reads RY.

Belongs to the MnmA/TRMU family. As to quaternary structure, interacts with TusE.

The protein resides in the cytoplasm. It carries out the reaction S-sulfanyl-L-cysteinyl-[protein] + uridine(34) in tRNA + AH2 + ATP = 2-thiouridine(34) in tRNA + L-cysteinyl-[protein] + A + AMP + diphosphate + H(+). Catalyzes the 2-thiolation of uridine at the wobble position (U34) of tRNA(Lys), tRNA(Glu) and tRNA(Gln), leading to the formation of s(2)U34, the first step of tRNA-mnm(5)s(2)U34 synthesis. Sulfur is provided by IscS, via a sulfur-relay system. Binds ATP and its substrate tRNAs. The sequence is that of tRNA-specific 2-thiouridylase MnmA from Enterobacter sp. (strain 638).